A 108-amino-acid polypeptide reads, in one-letter code: Protein YcgL (108 aa).

In terms of domain architecture, YcgL spans 12–96 (MFCVIYRSSK…PPEDLLKQHL (85 aa)).

The protein is Protein YcgL of Escherichia coli O17:K52:H18 (strain UMN026 / ExPEC).